The sequence spans 372 residues: Innexin shaking-B (372 aa).

Over 1–21 the chain is Cytoplasmic; it reads MLDIFRGLKNLVKVSHVKTDS. Residues 22-42 form a helical membrane-spanning segment; it reads IVFRLHYSITVMILMSFSLII. Residues 43-110 are Extracellular-facing; sequence TTRQYVGNPI…PADKKHYKYY (68 aa). A helical transmembrane segment spans residues 111–131; the sequence is QWVCFCLFFQAILFYTPRWLW. The Cytoplasmic segment spans residues 132 to 182; the sequence is KSWEGGKIHALIMDLDIGICSEAEKKQKKKLLLDYLWENLRYHNWWAYRYY. The helical transmembrane segment at 183-203 threads the bilayer; it reads VCELLALINVIGQMFLMNRFF. Over 204–267 the chain is Extracellular; that stretch reads DGEFITFGLK…ILPLNVVNEK (64 aa). Residues 268-288 traverse the membrane as a helical segment; that stretch reads IYIFLWFWFILLTFLTLLTLI. The Cytoplasmic segment spans residues 289-372; that stretch reads YRVVIIFSPR…PGLKGEIQDA (84 aa).

Belongs to the pannexin family. In terms of assembly, monomer (isoform Lethal). Isoform Neural is expressed in synapses of giant fibers (GF), in a large thoracic cell in location of postsynaptic target and optic lobe lamina and medulla. Isoform Lethal is expressed in embryonic mesodermal derivatives. During metamorphosis, both isoforms are dynamically expressed in pupal nervous system.

It is found in the cell membrane. The protein resides in the cell junction. The protein localises to the gap junction. Structural component of the gap junctions at electrical synapses in distal and mid-depth levels in the lamina. Isoform Lethal forms voltage sensitive intercellular channels through homotypic interactions. The sequence is that of Innexin shaking-B (shakB) from Drosophila melanogaster (Fruit fly).